We begin with the raw amino-acid sequence, 338 residues long: L-serine dehydratase (338 aa).

At lysine 39 the chain carries N6-(pyridoxal phosphate)lysine.

This sequence belongs to the serine/threonine dehydratase family. The cofactor is pyridoxal 5'-phosphate.

It localises to the cytoplasm. It carries out the reaction L-serine = pyruvate + NH4(+). The protein operates within carbohydrate biosynthesis; gluconeogenesis. In Saccharomyces cerevisiae (strain AWRI1631) (Baker's yeast), this protein is L-serine dehydratase (SDL1).